A 440-amino-acid chain; its full sequence is Proline--tRNA ligase (440 aa).

Belongs to the class-II aminoacyl-tRNA synthetase family. ProS type 2 subfamily. In terms of assembly, homodimer.

It is found in the cytoplasm. It carries out the reaction tRNA(Pro) + L-proline + ATP = L-prolyl-tRNA(Pro) + AMP + diphosphate. Its function is as follows. Catalyzes the attachment of proline to tRNA(Pro) in a two-step reaction: proline is first activated by ATP to form Pro-AMP and then transferred to the acceptor end of tRNA(Pro). The chain is Proline--tRNA ligase from Rhizobium leguminosarum bv. trifolii (strain WSM2304).